The sequence spans 498 residues: Glycerol kinase (498 aa).

Residue T12 participates in ADP binding. T12, T13, and S14 together coordinate ATP. Sn-glycerol 3-phosphate is bound at residue T12. Residue R16 coordinates ADP. Sn-glycerol 3-phosphate-binding residues include R82, E83, Y134, and D243. Glycerol contacts are provided by R82, E83, Y134, D243, and Q244. ADP is bound by residues T265 and G308. ATP-binding residues include T265, G308, Q312, and G412. G412 contributes to the ADP binding site.

It belongs to the FGGY kinase family.

It carries out the reaction glycerol + ATP = sn-glycerol 3-phosphate + ADP + H(+). It functions in the pathway polyol metabolism; glycerol degradation via glycerol kinase pathway; sn-glycerol 3-phosphate from glycerol: step 1/1. Inhibited by fructose 1,6-bisphosphate (FBP). In terms of biological role, key enzyme in the regulation of glycerol uptake and metabolism. Catalyzes the phosphorylation of glycerol to yield sn-glycerol 3-phosphate. This chain is Glycerol kinase, found in Rhizobium rhizogenes (strain K84 / ATCC BAA-868) (Agrobacterium radiobacter).